The chain runs to 308 residues: UPF0282 protein M164_2122 (308 aa).

This sequence belongs to the UPF0282 family.

The sequence is that of UPF0282 protein M164_2122 from Saccharolobus islandicus (strain M.16.4 / Kamchatka #3) (Sulfolobus islandicus).